A 675-amino-acid polypeptide reads, in one-letter code: Potassium-transporting ATPase ATP-binding subunit (675 aa).

The next 4 membrane-spanning stretches (helical) occupy residues 34-54 (IMFV…FPDI), 65-85 (LITI…SEAF), 216-236 (IALF…IVTL), and 245-265 (LILP…TTIG). The active-site 4-aspartylphosphate intermediate is Asp-304. ATP contacts are provided by residues Asp-341, Glu-345, 372–379 (FTAETRMS), and Lys-390. 2 residues coordinate Mg(2+): Asp-513 and Asp-517. The next 3 membrane-spanning stretches (helical) occupy residues 569 to 591 (ALTT…ALMM), 611 to 631 (AIIS…PIAM), and 644 to 664 (IFIN…FLGI).

The protein belongs to the cation transport ATPase (P-type) (TC 3.A.3) family. Type IA subfamily. As to quaternary structure, the system is composed of three essential subunits: KdpA, KdpB and KdpC.

The protein localises to the cell membrane. It catalyses the reaction K(+)(out) + ATP + H2O = K(+)(in) + ADP + phosphate + H(+). In terms of biological role, part of the high-affinity ATP-driven potassium transport (or Kdp) system, which catalyzes the hydrolysis of ATP coupled with the electrogenic transport of potassium into the cytoplasm. This subunit is responsible for energy coupling to the transport system and for the release of the potassium ions to the cytoplasm. The sequence is that of Potassium-transporting ATPase ATP-binding subunit from Staphylococcus aureus (strain Newman).